A 376-amino-acid polypeptide reads, in one-letter code: Queuine tRNA-ribosyltransferase (376 aa).

The active-site Proton acceptor is the D93. Residues 93–97, D147, Q190, and G217 contribute to the substrate site; that span reads DSGGF. Positions 248–254 are RNA binding; it reads GVGKPDD. Residue D267 is the Nucleophile of the active site. Zn(2+) contacts are provided by C305, C307, C310, and H336.

This sequence belongs to the queuine tRNA-ribosyltransferase family. As to quaternary structure, homodimer. Within each dimer, one monomer is responsible for RNA recognition and catalysis, while the other monomer binds to the replacement base PreQ1. Requires Zn(2+) as cofactor.

The enzyme catalyses 7-aminomethyl-7-carbaguanine + guanosine(34) in tRNA = 7-aminomethyl-7-carbaguanosine(34) in tRNA + guanine. It functions in the pathway tRNA modification; tRNA-queuosine biosynthesis. Functionally, catalyzes the base-exchange of a guanine (G) residue with the queuine precursor 7-aminomethyl-7-deazaguanine (PreQ1) at position 34 (anticodon wobble position) in tRNAs with GU(N) anticodons (tRNA-Asp, -Asn, -His and -Tyr). Catalysis occurs through a double-displacement mechanism. The nucleophile active site attacks the C1' of nucleotide 34 to detach the guanine base from the RNA, forming a covalent enzyme-RNA intermediate. The proton acceptor active site deprotonates the incoming PreQ1, allowing a nucleophilic attack on the C1' of the ribose to form the product. After dissociation, two additional enzymatic reactions on the tRNA convert PreQ1 to queuine (Q), resulting in the hypermodified nucleoside queuosine (7-(((4,5-cis-dihydroxy-2-cyclopenten-1-yl)amino)methyl)-7-deazaguanosine). The chain is Queuine tRNA-ribosyltransferase from Ruegeria sp. (strain TM1040) (Silicibacter sp.).